We begin with the raw amino-acid sequence, 321 residues long: Putative ribose-phosphate pyrophosphokinase 2 (321 aa).

Residues 41–43 and 100–101 contribute to the ATP site; these read DGE and RQ. His134 contributes to the Mg(2+) binding site. D-ribose 5-phosphate-binding positions include Asp223 and 227-231; that span reads NTGVT.

Belongs to the ribose-phosphate pyrophosphokinase family. Class I subfamily. Homohexamer. The cofactor is Mg(2+).

It is found in the cytoplasm. The enzyme catalyses D-ribose 5-phosphate + ATP = 5-phospho-alpha-D-ribose 1-diphosphate + AMP + H(+). Its pathway is metabolic intermediate biosynthesis; 5-phospho-alpha-D-ribose 1-diphosphate biosynthesis; 5-phospho-alpha-D-ribose 1-diphosphate from D-ribose 5-phosphate (route I): step 1/1. Functionally, involved in the biosynthesis of the central metabolite phospho-alpha-D-ribosyl-1-pyrophosphate (PRPP) via the transfer of pyrophosphoryl group from ATP to 1-hydroxyl of ribose-5-phosphate (Rib-5-P). The polypeptide is Putative ribose-phosphate pyrophosphokinase 2 (Lactococcus lactis subsp. lactis (strain IL1403) (Streptococcus lactis)).